Here is a 529-residue protein sequence, read N- to C-terminus: Ribonuclease Y (529 aa).

Residues glycine 4–tyrosine 24 form a helical membrane-spanning segment. Positions leucine 216 to valine 297 constitute a KH domain. The 94-residue stretch at alanine 342–glycine 435 folds into the HD domain.

The protein belongs to the RNase Y family.

The protein localises to the cell membrane. Endoribonuclease that initiates mRNA decay. In Helicobacter pylori (strain J99 / ATCC 700824) (Campylobacter pylori J99), this protein is Ribonuclease Y.